The sequence spans 485 residues: Signal recognition particle protein (485 aa).

Residues glycine 107–threonine 114, aspartate 189–arginine 193, and threonine 247–aspartate 250 contribute to the GTP site. Positions glycine 452–leucine 485 are disordered. Positions lysine 471 to leucine 485 are enriched in basic residues.

It belongs to the GTP-binding SRP family. SRP54 subfamily. Part of the signal recognition particle protein translocation system, which is composed of SRP and FtsY.

Its subcellular location is the cytoplasm. It carries out the reaction GTP + H2O = GDP + phosphate + H(+). Involved in targeting and insertion of nascent membrane proteins into the cytoplasmic membrane. Binds to the hydrophobic signal sequence of the ribosome-nascent chain (RNC) as it emerges from the ribosomes. The SRP-RNC complex is then targeted to the cytoplasmic membrane where it interacts with the SRP receptor FtsY. This Synechococcus elongatus (strain ATCC 33912 / PCC 7942 / FACHB-805) (Anacystis nidulans R2) protein is Signal recognition particle protein.